Consider the following 260-residue polypeptide: NH(3)-dependent NAD(+) synthetase (260 aa).

31 to 38 contacts ATP; the sequence is GLSGGLDS. Asp-37 provides a ligand contact to Mg(2+). Arg-112 serves as a coordination point for deamido-NAD(+). Residue Thr-132 participates in ATP binding. Residue Glu-137 participates in Mg(2+) binding. 2 residues coordinate ATP: Lys-161 and Ser-183.

This sequence belongs to the NAD synthetase family. Homodimer.

It catalyses the reaction deamido-NAD(+) + NH4(+) + ATP = AMP + diphosphate + NAD(+) + H(+). It participates in cofactor biosynthesis; NAD(+) biosynthesis; NAD(+) from deamido-NAD(+) (ammonia route): step 1/1. In terms of biological role, catalyzes the ATP-dependent amidation of deamido-NAD to form NAD. Uses ammonia as a nitrogen source. In Helicobacter pylori (strain G27), this protein is NH(3)-dependent NAD(+) synthetase.